The primary structure comprises 1014 residues: 2-oxoglutarate dehydrogenase, mitochondrial (1014 aa).

A mitochondrion-targeting transit peptide spans 1-30 (MLRFVSSQTCRYSSRGLLKTSLLKNASTVK). The thiamine diphosphate site is built by R306, D406, N439, and I441. Mg(2+) is bound by residues D406, N439, and I441.

This sequence belongs to the alpha-ketoglutarate dehydrogenase family. As to quaternary structure, component of the 2-oxoglutarate dehydrogenase complex (OGDC), also called alpha-ketoglutarate dehydrogenase (KGDH) complex. The copmplex is composed of the catalytic subunits OGDH (2-oxoglutarate dehydrogenase KGD1; also called E1 subunit), DLST (dihydrolipoamide succinyltransferase KGD2; also called E2 subunit) and DLD (dihydrolipoamide dehydrogenase LPD1; also called E3 subunit), and the assembly factor KGD4. It depends on thiamine diphosphate as a cofactor. The cofactor is Mg(2+).

Its subcellular location is the mitochondrion. It localises to the mitochondrion matrix. The protein resides in the mitochondrion nucleoid. The catalysed reaction is N(6)-[(R)-lipoyl]-L-lysyl-[protein] + 2-oxoglutarate + H(+) = N(6)-[(R)-S(8)-succinyldihydrolipoyl]-L-lysyl-[protein] + CO2. Catabolite repressed. In terms of biological role, the 2-oxoglutarate dehydrogenase complex catalyzes the overall conversion of 2-oxoglutarate to succinyl-CoA and CO(2). It contains multiple copies of three enzymatic components: 2-oxoglutarate dehydrogenase (E1), dihydrolipoamide succinyltransferase (E2) and lipoamide dehydrogenase (E3). The chain is 2-oxoglutarate dehydrogenase, mitochondrial (KGD1) from Saccharomyces cerevisiae (strain ATCC 204508 / S288c) (Baker's yeast).